Consider the following 760-residue polypeptide: Transferrin receptor protein 1 (760 aa).

The Cytoplasmic segment spans residues 1-67 (MMDQARSAFS…KPKRCSGSIC (67 aa)). Positions 1 to 67 (MMDQARSAFS…KPKRCSGSIC (67 aa)) are mediates interaction with SH3BP4. Residues Ser10 and Ser19 each carry the phosphoserine modification. Tyr20 is modified (phosphotyrosine). The short motif at 20–23 (YTRF) is the Endocytosis signal element. The residue at position 21 (Thr21) is a Phosphothreonine. Ser24 is subject to Phosphoserine. A Stop-transfer sequence motif is present at residues 58–61 (KPKR). Residues Cys62 and Cys67 are each lipidated (S-palmitoyl cysteine). A helical; Signal-anchor for type II membrane protein transmembrane segment spans residues 68–88 (YGTIAVIVFFLIGFMIGYLGY). Residues 89 to 760 (CKGVEPKTEC…GDVWDIDNEF (672 aa)) are Extracellular-facing. Thr104 carries O-linked (GalNAc...) threonine glycosylation. The PA domain maps to 223–313 (SKAATVTGKL…GTGDPYTPGF (91 aa)). Asn251 and Asn317 each carry an N-linked (GlcNAc...) asparagine glycan. The interval 569-760 (TMDTYKELIE…GDVWDIDNEF (192 aa)) is ligand-binding. The short motif at 646-648 (RGD) is the Cell attachment site; required for binding to transferrin element. Asn727 is a glycosylation site (N-linked (GlcNAc...) asparagine).

The protein belongs to the peptidase M28 family. M28B subfamily. In terms of assembly, homodimer; disulfide-linked. Binds one transferrin or HFE molecule per subunit. Binds the HLA class II histocompatibility antigen, DR1. Interacts with SH3BP3. Interacts with STEAP3; facilitates TFRC endocytosis in erythroid precursor cells. Interacts with GRM2. (Microbial infection) Interacts with Guanarito, Junin and Machupo arenavirus glycoprotein complex. As to quaternary structure, (Microbial infection) Interacts with rabies virus protein G. In terms of assembly, (Microbial infection) Interacts with SARS-CoV-2 spike protein S. Post-translationally, stearoylated by ZDHHC6 which inhibits TFRC-mediated activation of the JNK pathway and promotes mitochondrial fragmentation. Stearoylation does not affect iron uptake. N- and O-glycosylated, phosphorylated and palmitoylated. The serum form is only glycosylated. In terms of processing, proteolytically cleaved on Arg-100 to produce the soluble serum form (sTfR). Post-translationally, palmitoylated on both Cys-62 and Cys-67. Cys-62 seems to be the major site of palmitoylation.

It is found in the cell membrane. The protein resides in the melanosome. The protein localises to the secreted. Functionally, cellular uptake of iron occurs via receptor-mediated endocytosis of ligand-occupied transferrin receptor into specialized endosomes. Endosomal acidification leads to iron release. The apotransferrin-receptor complex is then recycled to the cell surface with a return to neutral pH and the concomitant loss of affinity of apotransferrin for its receptor. Transferrin receptor is necessary for development of erythrocytes and the nervous system. A second ligand, the hereditary hemochromatosis protein HFE, competes for binding with transferrin for an overlapping C-terminal binding site. Positively regulates T and B cell proliferation through iron uptake. Acts as a lipid sensor that regulates mitochondrial fusion by regulating activation of the JNK pathway. When dietary levels of stearate (C18:0) are low, promotes activation of the JNK pathway, resulting in HUWE1-mediated ubiquitination and subsequent degradation of the mitofusin MFN2 and inhibition of mitochondrial fusion. When dietary levels of stearate (C18:0) are high, TFRC stearoylation inhibits activation of the JNK pathway and thus degradation of the mitofusin MFN2. Mediates uptake of NICOL1 into fibroblasts where it may regulate extracellular matrix production. In terms of biological role, (Microbial infection) Acts as a receptor for new-world arenaviruses: Guanarito, Junin and Machupo virus. Its function is as follows. (Microbial infection) Acts as a host entry factor for rabies virus that hijacks the endocytosis of TFRC to enter cells. (Microbial infection) Acts as a host entry factor for SARS-CoV, MERS-CoV and SARS-CoV-2 viruses that hijack the endocytosis of TFRC to enter cells. The chain is Transferrin receptor protein 1 (TFRC) from Homo sapiens (Human).